We begin with the raw amino-acid sequence, 157 residues long: Subgroup A Rous sarcoma virus receptor pg950 (157 aa).

The N-terminal stretch at 1 to 19 is a signal peptide; that stretch reads MARLLPALLLLLLPGNVTG. N-linked (GlcNAc...) asparagine glycans are attached at residues Asn20 and Asn24. Topologically, residues 20 to 102 are extracellular; the sequence is NGSGNGSLSR…RALPARNHGR (83 aa). The LDL-receptor class A domain maps to 28-71; sequence SRCPPGQFRCSEPPGAHGECYPQDWLCDGHPDCDDGRDEWGCGT. Intrachain disulfides connect Cys30-Cys47, Cys37-Cys60, and Cys54-Cys69. An N-linked (GlcNAc...) asparagine glycan is attached at Asn81. Residues 103-125 traverse the membrane as a helical segment; that stretch reads MWMLITAVLLCCLVAVGGIAAWG. Over 126-157 the chain is Cytoplasmic; it reads KSKAKSRSDIFSLASASKELLVPDKSQADLFS.

As to quaternary structure, (Microbial infection) Interacts with Rous sarcoma virus envelope protein; this interaction allows the viral attachment.

Its subcellular location is the membrane. Functionally, responsible for susceptibility to the retrovirus subgroup A Rous sarcoma virus. This Coturnix japonica (Japanese quail) protein is Subgroup A Rous sarcoma virus receptor pg950.